A 213-amino-acid polypeptide reads, in one-letter code: Uracil phosphoribosyltransferase (213 aa).

5-phospho-alpha-D-ribose 1-diphosphate is bound by residues arginine 78, arginine 103, and aspartate 130–threonine 138. Uracil-binding positions include isoleucine 197 and glycine 202–alanine 204. Aspartate 203 is a 5-phospho-alpha-D-ribose 1-diphosphate binding site.

Belongs to the UPRTase family. Requires Mg(2+) as cofactor.

The enzyme catalyses UMP + diphosphate = 5-phospho-alpha-D-ribose 1-diphosphate + uracil. It functions in the pathway pyrimidine metabolism; UMP biosynthesis via salvage pathway; UMP from uracil: step 1/1. With respect to regulation, allosterically activated by GTP. Catalyzes the conversion of uracil and 5-phospho-alpha-D-ribose 1-diphosphate (PRPP) to UMP and diphosphate. The protein is Uracil phosphoribosyltransferase of Nocardioides sp. (strain ATCC BAA-499 / JS614).